The chain runs to 306 residues: MIKQRTLKRIVQATGVGLHTGKKVTLTMRPAPANTGVIYRRTDLNPPVDFPADAKSVRDTMLCTCLVNEHDVRISTVEHLNAALAGLGIDNIIIEVNAPEVPIMDGSASPFVYLLLDAGIEELNSAKKFLRLKETVRVEDGDKWAELSPFNGFRLDFTIDFNHPAIDSSTQRYCLDFSADSFVRQISRARTFGFMRDIEYLQSRGLCLGGSFDCAIVVDDYRVLNEDGLRFEDEFVRHKMLDAIGDLFMCGHNIIGAFTAYKSGHALNNKLLQAVLAKQEAWEFVTFQDEAEMPLAFKAPSTVLAY.

3 residues coordinate Zn(2+): H79, H238, and D242. Catalysis depends on H265, which acts as the Proton donor.

It belongs to the LpxC family. Zn(2+) serves as cofactor.

It catalyses the reaction a UDP-3-O-[(3R)-3-hydroxyacyl]-N-acetyl-alpha-D-glucosamine + H2O = a UDP-3-O-[(3R)-3-hydroxyacyl]-alpha-D-glucosamine + acetate. It functions in the pathway glycolipid biosynthesis; lipid IV(A) biosynthesis; lipid IV(A) from (3R)-3-hydroxytetradecanoyl-[acyl-carrier-protein] and UDP-N-acetyl-alpha-D-glucosamine: step 2/6. In terms of biological role, catalyzes the hydrolysis of UDP-3-O-myristoyl-N-acetylglucosamine to form UDP-3-O-myristoylglucosamine and acetate, the committed step in lipid A biosynthesis. The protein is UDP-3-O-acyl-N-acetylglucosamine deacetylase of Yersinia pseudotuberculosis serotype O:1b (strain IP 31758).